The chain runs to 78 residues: uncharacterized protein (78 aa).

A disordered region spans residues 51–78 (GGKWDGGGSGGKWNGGGGSGGGSWKKWN).

This is an uncharacterized protein from Dictyostelium discoideum (Social amoeba).